The primary structure comprises 314 residues: Aspartate carbamoyltransferase catalytic subunit (314 aa).

Carbamoyl phosphate-binding residues include R58 and T59. K86 contributes to the L-aspartate binding site. Residues R108, H136, and Q139 each coordinate carbamoyl phosphate. 2 residues coordinate L-aspartate: R169 and R223. Residues G264 and P265 each contribute to the carbamoyl phosphate site.

The protein belongs to the aspartate/ornithine carbamoyltransferase superfamily. ATCase family. Heterododecamer (2C3:3R2) of six catalytic PyrB chains organized as two trimers (C3), and six regulatory PyrI chains organized as three dimers (R2).

It catalyses the reaction carbamoyl phosphate + L-aspartate = N-carbamoyl-L-aspartate + phosphate + H(+). It participates in pyrimidine metabolism; UMP biosynthesis via de novo pathway; (S)-dihydroorotate from bicarbonate: step 2/3. Functionally, catalyzes the condensation of carbamoyl phosphate and aspartate to form carbamoyl aspartate and inorganic phosphate, the committed step in the de novo pyrimidine nucleotide biosynthesis pathway. The polypeptide is Aspartate carbamoyltransferase catalytic subunit (Jannaschia sp. (strain CCS1)).